A 360-amino-acid chain; its full sequence is BLOC-1-related complex subunit 6 (360 aa).

The disordered stretch occupies residues 1-201 (MEAAQGRLGP…TGAGGGRRAT (201 aa)). Positions 23-33 (ATFSGRPSRTP) are enriched in polar residues. At T41 the chain carries Phosphothreonine. Residue S130 is modified to Phosphoserine. Residues 144–155 (EGDDDDDEDEEA) show a composition bias toward acidic residues. Position 173 is a phosphoserine (S173). Gly residues predominate over residues 179–198 (GACGGGGSSSSGETGAGGGR). Residue T201 is modified to Phosphothreonine. S204 carries the post-translational modification Phosphoserine.

This sequence belongs to the BORCS6 family. In terms of assembly, component of the BLOC-one-related complex (BORC) which is composed of BLOC1S1, BLOC1S2, BORCS5, BORCS6, BORCS7, BORCS8, KXD1 and SNAPIN.

It is found in the lysosome membrane. In terms of biological role, as part of the BORC complex may play a role in lysosomes movement and localization at the cell periphery. Associated with the cytosolic face of lysosomes, the BORC complex may recruit ARL8B and couple lysosomes to microtubule plus-end-directed kinesin motor. In Mus musculus (Mouse), this protein is BLOC-1-related complex subunit 6.